The chain runs to 879 residues: MITANEIRRRFLEFYKAHGHEAVRSSSLVPKDDPSLLFTNAGMVQFKKIFLGQEKRAYSRATTSQKCLRVGGKHNDLENVGRTARHHTFFEMLGNFSFGDYFKEDAIKFAWKFLTEELKLPKERLYATVFRDDDEAEQLWLKHSDIPAERIYRMGEKDNFWSMGDTGPCGPCSEILIDQGEHMTCGPDCGIGKCDCDRFLEIWNLVFMQYDQDATGKREPLPKPSIDTGMGLERITAVCQGVFSNFDTDIFQAIIQYTCGLANVSYRSDDETDTALRVIADHSRAIAFMITDGILPSNEGRGYVLRRLIRRAYRFGRLIGLTDTFLHKTALKVVDIMGDDYPELRENSDFMARVVREEEDRFNRTLDKGLSMLEDELATLSASGAAHVPGDIAFRLYDTFGFPLDIVNDIAEKRGFSVDEDGFKALMKEQKERAKAAWKGSGEKDIASRFQPLLEEGMRSEFIGYDHLCGEGRIVALMDEHALAVERLAAGQKGYLVTNRTPFYGASGGQSGDIGTIASPSGKVRVVDTIKPSPELVVHHVEAVEGDILLDQEVDLTVTEDDRVASARNHTCTHLLHAALRRVLGDHVKQAGSLVAPDRLRFDFTHIAPMTPEELAAVEREVNRVIMADIPLETDHMHYDDAVKRGAMALFGEKYGDEVRVVAIADESVELCGGTHLRATGQAGLFLIVSESGVAAGVRRIEALTGWNAMHAVLAQRSEQAQLSAMLKARPGEIVSRVESLQKENRTLRKDMERAAAQATSGQGRNIMDEATDVAGVKLLAAKVEVPNVKALRDLMDDVRSKLVSGIACLAAVDGDKVQLIIAVSKDLQTRFTAPQLIKDVAAEVGGSGGGRPDMAQAGGTNPAGIDAAFAKLRSLIGG.

Residues His-570, His-574, Cys-672, and His-676 each coordinate Zn(2+).

It belongs to the class-II aminoacyl-tRNA synthetase family. Requires Zn(2+) as cofactor.

Its subcellular location is the cytoplasm. The enzyme catalyses tRNA(Ala) + L-alanine + ATP = L-alanyl-tRNA(Ala) + AMP + diphosphate. Functionally, catalyzes the attachment of alanine to tRNA(Ala) in a two-step reaction: alanine is first activated by ATP to form Ala-AMP and then transferred to the acceptor end of tRNA(Ala). Also edits incorrectly charged Ser-tRNA(Ala) and Gly-tRNA(Ala) via its editing domain. The sequence is that of Alanine--tRNA ligase from Nitratidesulfovibrio vulgaris (strain ATCC 29579 / DSM 644 / CCUG 34227 / NCIMB 8303 / VKM B-1760 / Hildenborough) (Desulfovibrio vulgaris).